The primary structure comprises 156 residues: Small ribosomal subunit protein uS7 (156 aa).

The protein belongs to the universal ribosomal protein uS7 family. Part of the 30S ribosomal subunit. Contacts proteins S9 and S11.

Functionally, one of the primary rRNA binding proteins, it binds directly to 16S rRNA where it nucleates assembly of the head domain of the 30S subunit. Is located at the subunit interface close to the decoding center, probably blocks exit of the E-site tRNA. This chain is Small ribosomal subunit protein uS7, found in Ruegeria pomeroyi (strain ATCC 700808 / DSM 15171 / DSS-3) (Silicibacter pomeroyi).